The primary structure comprises 347 residues: Olfactory receptor 6J1 (347 aa).

Topologically, residues 1–24 (MGNWTAAVTEFVLLGFSLSREVEL) are extracellular. The N-linked (GlcNAc...) asparagine glycan is linked to Asn3. Residues 25-45 (LLLVLLLPTFLLTLLGNLLII) form a helical membrane-spanning segment. The Cytoplasmic segment spans residues 46–53 (STVLSCSR). The helical transmembrane segment at 54 to 74 (LHTPMYFFLCNLSILDILFTS) threads the bilayer. The Extracellular segment spans residues 75–98 (VISPKVLANLGSRDKTISFAGCIT). A disulfide bridge connects residues Cys96 and Cys188. The helical transmembrane segment at 99–119 (QCYFYFFLGTVEFLLLTVMSY) threads the bilayer. Residues 120-138 (DRYATICCPLRYTTIMRPS) are Cytoplasmic-facing. The chain crosses the membrane as a helical span at residues 139–159 (VCIGTVVFSWVGGFLSVLFPT). Residues 160-196 (ILISQLPFCGSNIINHFFCDSGPLLALACADTTAIEL) lie on the Extracellular side of the membrane. A helical membrane pass occupies residues 197-216 (MDFMLSSMVILCCIVLVAYS). At 217–236 (YTYIILTIVRIPSASGRKKA) the chain is on the cytoplasmic side. The helical transmembrane segment at 237–257 (FNTCASHLTIVIISSGITVFI) threads the bilayer. Over 258–270 (YVTPSQKEYLEIN) the chain is Extracellular. Residues 271–291 (KIPLVLSSVVTPFLNPFIYTL) form a helical membrane-spanning segment. The Cytoplasmic portion of the chain corresponds to 292-347 (RNDTVQGVLRDVWVRVRGVFEKRMRAVLRSRLSSNKDHQGRACSSPPCVYSVKLQC).

This sequence belongs to the G-protein coupled receptor 1 family.

The protein resides in the cell membrane. In terms of biological role, odorant receptor. The sequence is that of Olfactory receptor 6J1 (OR6J1) from Homo sapiens (Human).